Consider the following 328-residue polypeptide: L-lactate dehydrogenase (328 aa).

NAD(+)-binding positions include V18, E39, K46, Y71, and 85–86 (GA). Positions 88 and 94 each coordinate substrate. Residues S107, 124-126 (AAN), and S149 contribute to the NAD(+) site. A substrate-binding site is contributed by 126–129 (NPVD). Residue 154–157 (DSAR) participates in substrate binding. Residues R159 and H174 each coordinate beta-D-fructose 1,6-bisphosphate. The active-site Proton acceptor is the H181. At Y226 the chain carries Phosphotyrosine. A substrate-binding site is contributed by T235.

The protein belongs to the LDH/MDH superfamily. LDH family. In terms of assembly, homotetramer.

The protein localises to the cytoplasm. It catalyses the reaction (S)-lactate + NAD(+) = pyruvate + NADH + H(+). It functions in the pathway fermentation; pyruvate fermentation to lactate; (S)-lactate from pyruvate: step 1/1. With respect to regulation, allosterically activated by fructose 1,6-bisphosphate (FBP). In terms of biological role, catalyzes the conversion of lactate to pyruvate. This Streptococcus pneumoniae (strain 70585) protein is L-lactate dehydrogenase.